The sequence spans 310 residues: Probable deoxyhypusine synthase (310 aa).

The Nucleophile role is filled by K280.

It belongs to the deoxyhypusine synthase family. Requires NAD(+) as cofactor.

It catalyses the reaction [eIF5A protein]-L-lysine + spermidine = [eIF5A protein]-deoxyhypusine + propane-1,3-diamine. It functions in the pathway protein modification; eIF5A hypusination. Catalyzes the NAD-dependent oxidative cleavage of spermidine and the subsequent transfer of the butylamine moiety of spermidine to the epsilon-amino group of a specific lysine residue of the eIF-5A precursor protein to form the intermediate deoxyhypusine residue. In Aeropyrum pernix (strain ATCC 700893 / DSM 11879 / JCM 9820 / NBRC 100138 / K1), this protein is Probable deoxyhypusine synthase (dys).